The following is a 496-amino-acid chain: Lysine--tRNA ligase (496 aa).

Mg(2+) is bound by residues E409 and E416.

It belongs to the class-II aminoacyl-tRNA synthetase family. As to quaternary structure, homodimer. Requires Mg(2+) as cofactor.

The protein resides in the cytoplasm. The enzyme catalyses tRNA(Lys) + L-lysine + ATP = L-lysyl-tRNA(Lys) + AMP + diphosphate. The chain is Lysine--tRNA ligase from Streptococcus pneumoniae serotype 4 (strain ATCC BAA-334 / TIGR4).